We begin with the raw amino-acid sequence, 238 residues long: Pyruvate formate-lyase-activating enzyme (238 aa).

Positions 15 to 236 constitute a Radical SAM core domain; sequence VDGPGIRTVV…KKLEKYLKEL (222 aa). Residues Cys29, Cys33, and Cys36 each coordinate [4Fe-4S] cluster. S-adenosyl-L-methionine contacts are provided by residues 35-37, Gly78, 126-128, and His199; these read YCH and DIK.

It belongs to the organic radical-activating enzymes family. Requires [4Fe-4S] cluster as cofactor.

It localises to the cytoplasm. It catalyses the reaction glycyl-[formate C-acetyltransferase] + reduced [flavodoxin] + S-adenosyl-L-methionine = glycin-2-yl radical-[formate C-acetyltransferase] + semiquinone [flavodoxin] + 5'-deoxyadenosine + L-methionine + H(+). Its function is as follows. Activation of pyruvate formate-lyase under anaerobic conditions by generation of an organic free radical, using S-adenosylmethionine and reduced flavodoxin as cosubstrates to produce 5'-deoxy-adenosine. In Clostridium pasteurianum, this protein is Pyruvate formate-lyase-activating enzyme (act).